Consider the following 158-residue polypeptide: MAAQEKIPMLIEGQQMLMDELARLHAERPKIIDAIEEARAHGDLSENAEYHAAKERQGQVEAMIGDIEGKLSRALVIDPKTLSGDKVIFGATVHLLDEDDKPVKYQIVGQTEANAKGGRISYNSPLGRALIGRKVDDEIEVSVPSGDRYYLISKIEFI.

It belongs to the GreA/GreB family.

Functionally, necessary for efficient RNA polymerase transcription elongation past template-encoded arresting sites. The arresting sites in DNA have the property of trapping a certain fraction of elongating RNA polymerases that pass through, resulting in locked ternary complexes. Cleavage of the nascent transcript by cleavage factors such as GreA or GreB allows the resumption of elongation from the new 3'terminus. GreA releases sequences of 2 to 3 nucleotides. The polypeptide is Transcription elongation factor GreA (Zymomonas mobilis subsp. mobilis (strain ATCC 31821 / ZM4 / CP4)).